Reading from the N-terminus, the 242-residue chain is Ubiquinone biosynthesis O-methyltransferase (242 aa).

4 residues coordinate S-adenosyl-L-methionine: Arg-36, Gly-56, Asp-77, and Met-130.

Belongs to the methyltransferase superfamily. UbiG/COQ3 family.

It carries out the reaction a 3-demethylubiquinol + S-adenosyl-L-methionine = a ubiquinol + S-adenosyl-L-homocysteine + H(+). The catalysed reaction is a 3-(all-trans-polyprenyl)benzene-1,2-diol + S-adenosyl-L-methionine = a 2-methoxy-6-(all-trans-polyprenyl)phenol + S-adenosyl-L-homocysteine + H(+). Its pathway is cofactor biosynthesis; ubiquinone biosynthesis. Functionally, O-methyltransferase that catalyzes the 2 O-methylation steps in the ubiquinone biosynthetic pathway. This chain is Ubiquinone biosynthesis O-methyltransferase, found in Pasteurella multocida (strain Pm70).